Reading from the N-terminus, the 240-residue chain is Serine protease SplB (240 aa).

Positions 1–36 (MNKNVVIKSLAALTILTSVTGIGITLVEEVQQTAKA) are cleaved as a signal peptide. Residues His75, Asp113, and Ser193 each act as charge relay system in the active site.

It belongs to the peptidase S1B family.

Its subcellular location is the secreted. Serine protease that cleaves specifically after the sequence Trp-Glu-Leu-Gln. This chain is Serine protease SplB (splB), found in Staphylococcus aureus (strain MW2).